The following is a 103-amino-acid chain: Pyrimidine/purine nucleoside phosphorylase (103 aa).

It belongs to the nucleoside phosphorylase PpnP family.

It carries out the reaction a purine D-ribonucleoside + phosphate = a purine nucleobase + alpha-D-ribose 1-phosphate. The catalysed reaction is adenosine + phosphate = alpha-D-ribose 1-phosphate + adenine. It catalyses the reaction cytidine + phosphate = cytosine + alpha-D-ribose 1-phosphate. The enzyme catalyses guanosine + phosphate = alpha-D-ribose 1-phosphate + guanine. It carries out the reaction inosine + phosphate = alpha-D-ribose 1-phosphate + hypoxanthine. The catalysed reaction is thymidine + phosphate = 2-deoxy-alpha-D-ribose 1-phosphate + thymine. It catalyses the reaction uridine + phosphate = alpha-D-ribose 1-phosphate + uracil. The enzyme catalyses xanthosine + phosphate = alpha-D-ribose 1-phosphate + xanthine. Functionally, catalyzes the phosphorolysis of diverse nucleosides, yielding D-ribose 1-phosphate and the respective free bases. Can use uridine, adenosine, guanosine, cytidine, thymidine, inosine and xanthosine as substrates. Also catalyzes the reverse reactions. The protein is Pyrimidine/purine nucleoside phosphorylase of Shewanella putrefaciens (strain CN-32 / ATCC BAA-453).